A 524-amino-acid polypeptide reads, in one-letter code: GMP synthase [glutamine-hydrolyzing] (524 aa).

Residues Arg9–Asn207 form the Glutamine amidotransferase type-1 domain. The active-site Nucleophile is the Cys86. Active-site residues include His181 and Glu183. Residues Trp208 to Arg399 form the GMPS ATP-PPase domain. Ser235 to Ala241 serves as a coordination point for ATP.

Homodimer.

The enzyme catalyses XMP + L-glutamine + ATP + H2O = GMP + L-glutamate + AMP + diphosphate + 2 H(+). The protein operates within purine metabolism; GMP biosynthesis; GMP from XMP (L-Gln route): step 1/1. Its function is as follows. Catalyzes the synthesis of GMP from XMP. The polypeptide is GMP synthase [glutamine-hydrolyzing] (Coxiella burnetii (strain Dugway 5J108-111)).